A 507-amino-acid polypeptide reads, in one-letter code: 2,3-bisphosphoglycerate-independent phosphoglycerate mutase (507 aa).

The Mn(2+) site is built by aspartate 11 and serine 61. The active-site Phosphoserine intermediate is serine 61. Residues histidine 122, 150-151, arginine 182, arginine 188, 257-260, and lysine 332 each bind substrate; these read RD and RPDR. Aspartate 397, histidine 401, aspartate 438, histidine 439, and histidine 456 together coordinate Mn(2+).

It belongs to the BPG-independent phosphoglycerate mutase family. Monomer. Mn(2+) is required as a cofactor.

It catalyses the reaction (2R)-2-phosphoglycerate = (2R)-3-phosphoglycerate. It participates in carbohydrate degradation; glycolysis; pyruvate from D-glyceraldehyde 3-phosphate: step 3/5. Functionally, catalyzes the interconversion of 2-phosphoglycerate and 3-phosphoglycerate. This is 2,3-bisphosphoglycerate-independent phosphoglycerate mutase from Mycoplasma genitalium (strain ATCC 33530 / DSM 19775 / NCTC 10195 / G37) (Mycoplasmoides genitalium).